The sequence spans 938 residues: ATP-dependent 6-phosphofructokinase subunit beta (938 aa).

The tract at residues 1-552 (MTQSLPLLNG…HLDNFMAINS (552 aa)) is N-terminal catalytic PFK domain 1. ATP-binding positions include Gly185, 249-250 (RC), and 279-282 (GDGS). Asp280 contacts Mg(2+). Beta-D-fructose 6-phosphate contacts are provided by residues 325–327 (SID), Arg362, 369–371 (MGR), Glu426, Arg454, and 460–463 (HVQR). Asp327 functions as the Proton acceptor in the catalytic mechanism. The segment at 553–566 (ADHIEPKLPEHTHM) is interdomain linker. A C-terminal regulatory PFK domain 2 region spans residues 567–938 (KIAIVNVGAP…ADHLVGRKKL (372 aa)). Beta-D-fructose 2,6-bisphosphate is bound by residues Arg637, 695–699 (TLSNN), Arg733, 740–742 (QGG), Lys826, 832–835 (HVQQ), and Arg915.

It belongs to the phosphofructokinase type A (PFKA) family. ATP-dependent PFK group I subfamily. Eukaryotic two domain clade 'E' sub-subfamily. As to quaternary structure, heterooctamer of 4 alpha and 4 beta chains. Requires Mg(2+) as cofactor.

The protein localises to the cytoplasm. The catalysed reaction is beta-D-fructose 6-phosphate + ATP = beta-D-fructose 1,6-bisphosphate + ADP + H(+). It functions in the pathway carbohydrate degradation; glycolysis; D-glyceraldehyde 3-phosphate and glycerone phosphate from D-glucose: step 3/4. Its activity is regulated as follows. Allosterically activated by ADP, AMP, or fructose 2,6-bisphosphate, and allosterically inhibited by ATP or citrate. Catalyzes the phosphorylation of D-fructose 6-phosphate to fructose 1,6-bisphosphate by ATP, the first committing step of glycolysis. This chain is ATP-dependent 6-phosphofructokinase subunit beta (PFK2), found in Kluyveromyces lactis (strain ATCC 8585 / CBS 2359 / DSM 70799 / NBRC 1267 / NRRL Y-1140 / WM37) (Yeast).